We begin with the raw amino-acid sequence, 118 residues long: MMVTLVTRKDIPPWVKVPEDLKDPEVFQVQSLVLKYLFGPQGSRMSHIEQVSQAMFELKNLESPEELIEVFIYGSQNNKIRAKWMLQSMAERYHLRQQKGVLKLEESMKTLELGQCIE.

The 63-residue stretch at 24–86 folds into the KH; atypical domain; it reads PEVFQVQSLV…NNKIRAKWML (63 aa).

This sequence belongs to the KHDC1 family.

The protein resides in the cytoplasm. Functionally, involved in the maintenance of embryonic stem (ES) cell pluripotency. Dispensable for self-renewal of pluripotent ES cells and establishment of germ cells. Associates with specific target mRNAs. The sequence is that of Developmental pluripotency-associated protein 5A (Dppa5a) from Mus musculus (Mouse).